The following is a 780-amino-acid chain: LPS-assembly protein LptD (780 aa).

The N-terminal stretch at 1–24 (MKKRFPTLLATLIWTALYSQHTLA) is a signal peptide.

It belongs to the LptD family. Component of the lipopolysaccharide transport and assembly complex. Interacts with LptE and LptA.

Its subcellular location is the cell outer membrane. Its function is as follows. Together with LptE, is involved in the assembly of lipopolysaccharide (LPS) at the surface of the outer membrane. This is LPS-assembly protein LptD from Yersinia pseudotuberculosis serotype I (strain IP32953).